A 501-amino-acid chain; its full sequence is Glutamyl-tRNA(Gln) amidotransferase subunit A (501 aa).

Residues lysine 80 and serine 155 each act as charge relay system in the active site. Serine 179 (acyl-ester intermediate) is an active-site residue.

It belongs to the amidase family. GatA subfamily. In terms of assembly, heterotrimer of A, B and C subunits.

It carries out the reaction L-glutamyl-tRNA(Gln) + L-glutamine + ATP + H2O = L-glutaminyl-tRNA(Gln) + L-glutamate + ADP + phosphate + H(+). In terms of biological role, allows the formation of correctly charged Gln-tRNA(Gln) through the transamidation of misacylated Glu-tRNA(Gln) in organisms which lack glutaminyl-tRNA synthetase. The reaction takes place in the presence of glutamine and ATP through an activated gamma-phospho-Glu-tRNA(Gln). The sequence is that of Glutamyl-tRNA(Gln) amidotransferase subunit A from Cupriavidus necator (strain ATCC 17699 / DSM 428 / KCTC 22496 / NCIMB 10442 / H16 / Stanier 337) (Ralstonia eutropha).